Consider the following 294-residue polypeptide: Glyceraldehyde-3-phosphate dehydrogenase (294 aa).

3 residues coordinate NAD(+): D19, R63, and T105. D-glyceraldehyde 3-phosphate is bound by residues 134–136 (SCT) and T165. C135 acts as the Nucleophile in catalysis. The segment at 169–188 (KTVDGPSHKDWRGGRGASQN) is disordered. D-glyceraldehyde 3-phosphate contacts are provided by residues 194–195 (TG) and R217.

This sequence belongs to the glyceraldehyde-3-phosphate dehydrogenase family. In terms of assembly, homotetramer.

It is found in the cytoplasm. It catalyses the reaction D-glyceraldehyde 3-phosphate + phosphate + NAD(+) = (2R)-3-phospho-glyceroyl phosphate + NADH + H(+). It participates in carbohydrate degradation; glycolysis; pyruvate from D-glyceraldehyde 3-phosphate: step 1/5. Functionally, catalyzes the oxidative phosphorylation of glyceraldehyde 3-phosphate (G3P) to 1,3-bisphosphoglycerate (BPG) using the cofactor NAD. The first reaction step involves the formation of a hemiacetal intermediate between G3P and a cysteine residue, and this hemiacetal intermediate is then oxidized to a thioester, with concomitant reduction of NAD to NADH. The reduced NADH is then exchanged with the second NAD, and the thioester is attacked by a nucleophilic inorganic phosphate to produce BPG. The sequence is that of Glyceraldehyde-3-phosphate dehydrogenase (gap) from Citrobacter freundii.